Here is a 674-residue protein sequence, read N- to C-terminus: Linear primary-alkylsulfatase (674 aa).

Positions 1–41 (MKLNALSTATHGSRSSPVKLWKFSTSFLLAASIIVSGQSWA) are cleaved as a signal peptide. Residues H192, H194, D196, H197, E303, and E322 each coordinate Zn(2+). Sulfate-binding positions include 330–335 (NTYSLR) and R340. Zn(2+) is bound at residue H367. Y428 is a binding site for sulfate.

It belongs to the metallo-beta-lactamase superfamily. Type III sulfatase family. As to quaternary structure, homodimer. Zn(2+) serves as cofactor.

It is found in the periplasm. It catalyses the reaction a primary linear alkyl sulfate ester + H2O = a primary alcohol + sulfate + H(+). Inhibited by EDTA. Slightly activated in the presence of Ca(2+). Alkylsulfatase that cleaves primary alkyl sulfates such as sodium octyl sulfate and the widely used detergent sodium dodecyl sulfate (SDS). This is Linear primary-alkylsulfatase from Pseudomonas sp.